Reading from the N-terminus, the 503-residue chain is Aminoaldehyde dehydrogenase 2, peroxisomal (503 aa).

The Na(+) site is built by Ile28, Asp99, and Leu189. An NAD(+)-binding site is contributed by 238–245 (GSTMTGSK). Glu260 (proton acceptor) is an active-site residue. 2 residues coordinate NAD(+): Cys294 and Glu393. The Nucleophile role is filled by Cys294. The Microbody targeting signal motif lies at 501–503 (SKL).

It belongs to the aldehyde dehydrogenase family. In terms of tissue distribution, expressed in leaves, flowers and fruits.

The protein resides in the peroxisome. The catalysed reaction is 4-aminobutanal + NAD(+) + H2O = 4-aminobutanoate + NADH + 2 H(+). The enzyme catalyses 3-aminopropanal + NAD(+) + H2O = beta-alanine + NADH + 2 H(+). The protein operates within amine and polyamine biosynthesis; betaine biosynthesis via choline pathway; betaine from betaine aldehyde: step 1/1. Its function is as follows. Dehydrogenase that catalyzes the oxidation of several aminoaldehydes. Metabolizes and detoxifies aldehyde products of polyamine degradation to non-toxic amino acids. Catalyzes the oxidation of 4-aminobutanal and 3-aminopropanal to 4-aminobutanoate and beta-alanine, respectively. In Malus domestica (Apple), this protein is Aminoaldehyde dehydrogenase 2, peroxisomal.